The sequence spans 156 residues: Small ribosomal subunit protein uS7 (156 aa).

This sequence belongs to the universal ribosomal protein uS7 family. In terms of assembly, part of the 30S ribosomal subunit. Contacts proteins S9 and S11.

In terms of biological role, one of the primary rRNA binding proteins, it binds directly to 16S rRNA where it nucleates assembly of the head domain of the 30S subunit. Is located at the subunit interface close to the decoding center, probably blocks exit of the E-site tRNA. This is Small ribosomal subunit protein uS7 from Geobacter metallireducens (strain ATCC 53774 / DSM 7210 / GS-15).